Here is a 267-residue protein sequence, read N- to C-terminus: MRILVKISYQGSNFLGFQIQQHGRTVQQQFEKILKRMHKRHVRIHPSSRTDRGVHAIEQYFHFDTELNIAPDKWQYAMNSALPDDIYVNEVSIVDDDFHCRYDCVGKRYRYKVYQGKHRDVFMSGLKTFYADSLDLEKMNEAAQQFIGTHDFTGFCSQKTEVESKERTLYQSEIIKTENGFDYIVTGSGFLYNMVRVLVAFLIEVGKGKRQPEEVPILLEAKDRKQVPFTAPAEGLYLEKIYLAPQELINDFGPDIKIHRKKSLEND.

The Nucleophile role is filled by Asp-51. Tyr-109 is a substrate binding site.

It belongs to the tRNA pseudouridine synthase TruA family. Homodimer.

The catalysed reaction is uridine(38/39/40) in tRNA = pseudouridine(38/39/40) in tRNA. In terms of biological role, formation of pseudouridine at positions 38, 39 and 40 in the anticodon stem and loop of transfer RNAs. This Staphylococcus carnosus (strain TM300) protein is tRNA pseudouridine synthase A.